Here is a 134-residue protein sequence, read N- to C-terminus: MILKILIMIPDGIFWNNKAEEIILPTNTGQIGILKNHAPLITALDIGVILIRTDKKWVPFIIMGGFALIKQNKITILVNGAESAGTLKLVQSEAAFQEATNKLENAKSKKQYVDALFLFKCAKARYQAAKQLVS.

Belongs to the ATPase epsilon chain family. In terms of assembly, F-type ATPases have 2 components, CF(1) - the catalytic core - and CF(0) - the membrane proton channel. CF(1) has five subunits: alpha(3), beta(3), gamma(1), delta(1), epsilon(1). CF(0) has three main subunits: a, b and c.

The protein resides in the plastid membrane. Its function is as follows. Produces ATP from ADP in the presence of a proton gradient across the membrane. This is ATP synthase epsilon chain, plastid from Prototheca wickerhamii.